Reading from the N-terminus, the 384-residue chain is Histidinol-phosphate aminotransferase 1 (384 aa).

At lysine 233 the chain carries N6-(pyridoxal phosphate)lysine.

Belongs to the class-II pyridoxal-phosphate-dependent aminotransferase family. Histidinol-phosphate aminotransferase subfamily. As to quaternary structure, homodimer. The cofactor is pyridoxal 5'-phosphate.

It catalyses the reaction L-histidinol phosphate + 2-oxoglutarate = 3-(imidazol-4-yl)-2-oxopropyl phosphate + L-glutamate. It participates in amino-acid biosynthesis; L-histidine biosynthesis; L-histidine from 5-phospho-alpha-D-ribose 1-diphosphate: step 7/9. The polypeptide is Histidinol-phosphate aminotransferase 1 (Thiobacillus denitrificans (strain ATCC 25259 / T1)).